Here is a 96-residue protein sequence, read N- to C-terminus: uncharacterized protein (96 aa).

It localises to the mitochondrion. This is an uncharacterized protein from Saccharomyces cerevisiae (strain ATCC 204508 / S288c) (Baker's yeast).